Consider the following 373-residue polypeptide: Alginate lyase (373 aa).

The N-terminal stretch at 1-25 is a signal peptide; it reads MRLPMQKLLIPTLLGLAMFAGSVNA. Substrate contacts are provided by residues 66–67, 139–140, and tyrosine 257; these read SK and HT.

Belongs to the polysaccharide lyase 5 family.

The protein resides in the periplasm. The catalysed reaction is Eliminative cleavage of alginate to give oligosaccharides with 4-deoxy-alpha-L-erythro-hex-4-enuronosyl groups at their non-reducing ends and beta-D-mannuronate at their reducing end.. Functionally, catalyzes the depolymerization of alginate by cleaving the beta-1,4 glycosidic bond between two adjacent sugar residues via a beta-elimination mechanism. May serve to degrade mislocalized alginate that is trapped in the periplasmic space. The chain is Alginate lyase from Pseudomonas fluorescens.